The sequence spans 118 residues: MARVKRGVIARARHKKVLKQAKGYYGARSRVYRVAFQAVIKAGQYAYRDRRQRKRQFRQLWIARINAAARQNGISYSRFINGLKKASVEIDRKILADIAVFDKVAFTALVEKAKVALA.

Belongs to the bacterial ribosomal protein bL20 family.

Functionally, binds directly to 23S ribosomal RNA and is necessary for the in vitro assembly process of the 50S ribosomal subunit. It is not involved in the protein synthesizing functions of that subunit. This Edwardsiella ictaluri (strain 93-146) protein is Large ribosomal subunit protein bL20.